The sequence spans 445 residues: Signal recognition particle 54 kDa protein (445 aa).

Residues 106 to 113 (GLQGSGKT), 186 to 190 (DTAGR), and 244 to 247 (TKLD) each bind GTP.

The protein belongs to the GTP-binding SRP family. SRP54 subfamily. As to quaternary structure, part of the signal recognition particle protein translocation system, which is composed of SRP and FtsY. Archaeal SRP consists of a 7S RNA molecule of 300 nucleotides and two protein subunits: SRP54 and SRP19.

The protein localises to the cytoplasm. It carries out the reaction GTP + H2O = GDP + phosphate + H(+). Involved in targeting and insertion of nascent membrane proteins into the cytoplasmic membrane. Binds to the hydrophobic signal sequence of the ribosome-nascent chain (RNC) as it emerges from the ribosomes. The SRP-RNC complex is then targeted to the cytoplasmic membrane where it interacts with the SRP receptor FtsY. The polypeptide is Signal recognition particle 54 kDa protein (Methanobrevibacter smithii (strain ATCC 35061 / DSM 861 / OCM 144 / PS)).